The sequence spans 240 residues: Biotin--[acetyl-CoA-carboxylase] ligase (240 aa).

The region spanning 1–176 (MLARTDSTNA…AFARWQAQLD (176 aa)) is the BPL/LPL catalytic domain. Biotin contacts are provided by residues 7 to 9 (STN), Q30, 34 to 36 (RGR), and K102.

The protein belongs to the biotin--protein ligase family.

It carries out the reaction biotin + L-lysyl-[protein] + ATP = N(6)-biotinyl-L-lysyl-[protein] + AMP + diphosphate + H(+). In terms of biological role, activates biotin to form biotinyl-5'-adenylate and transfers the biotin moiety to biotin-accepting proteins. The polypeptide is Biotin--[acetyl-CoA-carboxylase] ligase (birA) (Paracoccus denitrificans).